A 665-amino-acid chain; its full sequence is Protein-arginine deiminase type-2 (665 aa).

18 residues coordinate Ca(2+): aspartate 123, aspartate 125, aspartate 127, valine 129, glutamate 131, asparagine 154, aspartate 156, glutamate 158, aspartate 166, aspartate 169, lysine 171, aspartate 177, aspartate 180, glutamate 354, aspartate 389, phenylalanine 408, leucine 411, and glutamate 412. Cysteine 647 acts as the Nucleophile in catalysis.

Belongs to the protein arginine deiminase family. In terms of assembly, homodimer. Requires Ca(2+) as cofactor. In terms of tissue distribution, detected in keratinocytes in epidermis (at protein level).

It is found in the cytoplasm. The enzyme catalyses L-arginyl-[protein] + H2O = L-citrullyl-[protein] + NH4(+). Functionally, catalyzes the deimination of arginine residues of proteins. The sequence is that of Protein-arginine deiminase type-2 (PADI2) from Homo sapiens (Human).